A 544-amino-acid polypeptide reads, in one-letter code: Terpene synthase 9 (544 aa).

Mg(2+) contacts are provided by D296, D300, and E449. Residues 296–300 carry the DDXXD motif motif; that stretch reads DDTFD.

The protein belongs to the terpene synthase family. Tpsa subfamily. Requires Mg(2+) as cofactor. The cofactor is Mn(2+).

It catalyses the reaction (2E,6E)-farnesyl diphosphate = (1E,4E)-germacrene B + diphosphate. The catalysed reaction is (2E)-geranyl diphosphate = terpinolene + diphosphate. The enzyme catalyses (2E)-geranyl diphosphate = limonene + diphosphate. It carries out the reaction (2E)-geranyl diphosphate = beta-myrcene + diphosphate. It catalyses the reaction (2Z,6Z)-farnesyl diphosphate = germacrene A + diphosphate. The catalysed reaction is (2Z,6Z)-farnesyl diphosphate = alpha-humulene + diphosphate. It participates in secondary metabolite biosynthesis; terpenoid biosynthesis. Sesquiterpene synthase involved in the biosynthesis of volatile compounds. Mediates the conversion of (2E,6E)-farnesyl diphosphate (FPP) into (1E,4E)-germacrene B, but also smaller amounts of germacrene A and C, and of (2Z,6Z)-farnesyl diphosphate ((ZZ)-FPP) into alpha-humulene, germacrene A and germacrene B. Can act with a low efficiency as a monoterpene synthase with geranyl diphosphate (GPP) as substrate, thus producing beta-myrcene, limonene and terpinolene. The sequence is that of Terpene synthase 9 from Solanum habrochaites (Wild tomato).